Here is a 468-residue protein sequence, read N- to C-terminus: 3-isopropylmalate dehydratase large subunit (468 aa).

[4Fe-4S] cluster contacts are provided by C347, C407, and C410.

Belongs to the aconitase/IPM isomerase family. LeuC type 1 subfamily. As to quaternary structure, heterodimer of LeuC and LeuD. [4Fe-4S] cluster serves as cofactor.

The catalysed reaction is (2R,3S)-3-isopropylmalate = (2S)-2-isopropylmalate. The protein operates within amino-acid biosynthesis; L-leucine biosynthesis; L-leucine from 3-methyl-2-oxobutanoate: step 2/4. Functionally, catalyzes the isomerization between 2-isopropylmalate and 3-isopropylmalate, via the formation of 2-isopropylmaleate. The protein is 3-isopropylmalate dehydratase large subunit of Prochlorococcus marinus (strain SARG / CCMP1375 / SS120).